Here is a 25-residue protein sequence, read N- to C-terminus: Antimicrobial peptide scolopin-2 (25 aa).

Expressed by the venom gland.

Its subcellular location is the secreted. Antimicrobial peptide against both Gram-positive, -negative and yeast. Also induces histamine release by mast cells and shows moderate hemolytic activities against both human and rabbit red cells. This chain is Antimicrobial peptide scolopin-2, found in Scolopendra mutilans (Chinese red-headed centipede).